We begin with the raw amino-acid sequence, 120 residues long: uncharacterized protein (120 aa).

This sequence to B.subtilis XkdH.

This is an uncharacterized protein from Bacillus subtilis (strain 168).